Reading from the N-terminus, the 95-residue chain is Aspartyl/glutamyl-tRNA(Asn/Gln) amidotransferase subunit C (95 aa).

The protein belongs to the GatC family. In terms of assembly, heterotrimer of A, B and C subunits.

The catalysed reaction is L-glutamyl-tRNA(Gln) + L-glutamine + ATP + H2O = L-glutaminyl-tRNA(Gln) + L-glutamate + ADP + phosphate + H(+). It carries out the reaction L-aspartyl-tRNA(Asn) + L-glutamine + ATP + H2O = L-asparaginyl-tRNA(Asn) + L-glutamate + ADP + phosphate + 2 H(+). Its function is as follows. Allows the formation of correctly charged Asn-tRNA(Asn) or Gln-tRNA(Gln) through the transamidation of misacylated Asp-tRNA(Asn) or Glu-tRNA(Gln) in organisms which lack either or both of asparaginyl-tRNA or glutaminyl-tRNA synthetases. The reaction takes place in the presence of glutamine and ATP through an activated phospho-Asp-tRNA(Asn) or phospho-Glu-tRNA(Gln). The chain is Aspartyl/glutamyl-tRNA(Asn/Gln) amidotransferase subunit C from Caldanaerobacter subterraneus subsp. tengcongensis (strain DSM 15242 / JCM 11007 / NBRC 100824 / MB4) (Thermoanaerobacter tengcongensis).